The primary structure comprises 110 residues: Cytochrome subunit of sulfide dehydrogenase (110 aa).

The signal sequence occupies residues 1–16 (MLAAAPLLLASGNGFA). Heme c is bound by residues cysteine 41, cysteine 44, histidine 45, and methionine 83.

In terms of assembly, dimer of one cytochrome and one flavoprotein. In terms of processing, binds 1 heme c group covalently per subunit.

It is found in the periplasm. In terms of biological role, monoheme cytochrome that function as the electron transport subunit of sulfide dehydrogenase. The chain is Cytochrome subunit of sulfide dehydrogenase (fccA) from Chlorobaculum tepidum (strain ATCC 49652 / DSM 12025 / NBRC 103806 / TLS) (Chlorobium tepidum).